A 339-amino-acid chain; its full sequence is MNQWMDLAERVLDGAEVTNQEALAILNCPDEDLLLLMHAAFHIRKRFYGKKVKLNMIMNAKSGLCPENCGYCSQSSISKAPIESYRMVDKHILLKGAKRAHDLNIGTYCIVASGRGPSNREVDQVVDAVKEIKETYGLKICACLGLLKPEQAERLKQAGVDRYNHNINTSQRNHSNITTSHTYDDRVNTVETAKQSGMSPCSGVIVGMKETKQDVIDMANSLKALDADSIPVNFLHAIDGTPLEGVSELHPVYCLKVLALFRFINPSKEIRISGGREVNLRSLQPLGLYAANSIFVGDYLTTAGQQETEDHQMLHDLGFEVESVEEMKAGLQSACNTEV.

One can recognise a Radical SAM core domain in the interval Phe-47–Arg-276. Residues Cys-65, Cys-69, and Cys-72 each coordinate [4Fe-4S] cluster. The [2Fe-2S] cluster site is built by Cys-109, Cys-141, Cys-201, and Arg-271.

It belongs to the radical SAM superfamily. Biotin synthase family. As to quaternary structure, homodimer. It depends on [4Fe-4S] cluster as a cofactor. [2Fe-2S] cluster is required as a cofactor.

It carries out the reaction (4R,5S)-dethiobiotin + (sulfur carrier)-SH + 2 reduced [2Fe-2S]-[ferredoxin] + 2 S-adenosyl-L-methionine = (sulfur carrier)-H + biotin + 2 5'-deoxyadenosine + 2 L-methionine + 2 oxidized [2Fe-2S]-[ferredoxin]. Its pathway is cofactor biosynthesis; biotin biosynthesis; biotin from 7,8-diaminononanoate: step 2/2. Its function is as follows. Catalyzes the conversion of dethiobiotin (DTB) to biotin by the insertion of a sulfur atom into dethiobiotin via a radical-based mechanism. The protein is Biotin synthase of Bacillus velezensis (strain DSM 23117 / BGSC 10A6 / LMG 26770 / FZB42) (Bacillus amyloliquefaciens subsp. plantarum).